The sequence spans 320 residues: MENRNTFSWVKEQMTRSISVSIMIYVITQTSISNAYPIFAQQGYENPREATGRIVCANCHLASKPVDIEVPQAVLPDTVFEAVLRIPYDMQLKQVLANGKKGGLNVGAVLILPEGFELAPPDRISPELKEKIGNLSFQSYRPDKKNILVIGPVPGKKYSEIVFPILSPDPATKKDAYFLKYPIYVGGNRGRGQIYPDGSKSNNTVYNATSTGIVRKILRKEKGGYEISIVDASDGRQVIDTIPPGPELLVSEGESIKLDQPLTSNPNVGGFGQGDAEIVLQDPLRVQGLLFFFASVILAQVFLVLKKKQFEKVQLYEMNF.

The first 35 residues, 1–35 (MENRNTFSWVKEQMTRSISVSIMIYVITQTSISNA), serve as a signal peptide directing secretion. Heme is bound by residues Y36, C56, C59, and H60. The helical transmembrane segment at 286 to 306 (VQGLLFFFASVILAQVFLVLK) threads the bilayer.

Belongs to the cytochrome f family. In terms of assembly, the 4 large subunits of the cytochrome b6-f complex are cytochrome b6, subunit IV (17 kDa polypeptide, petD), cytochrome f and the Rieske protein, while the 4 small subunits are PetG, PetL, PetM and PetN. The complex functions as a dimer. Requires heme as cofactor.

The protein localises to the plastid. Its subcellular location is the chloroplast thylakoid membrane. Functionally, component of the cytochrome b6-f complex, which mediates electron transfer between photosystem II (PSII) and photosystem I (PSI), cyclic electron flow around PSI, and state transitions. This is Cytochrome f from Agrostis stolonifera (Creeping bentgrass).